The chain runs to 176 residues: Small ribosomal subunit protein uS5 (176 aa).

An S5 DRBM domain is found at 15-78; it reads FEERIVEIRR…SAARRNVFEV (64 aa).

Belongs to the universal ribosomal protein uS5 family. Part of the 30S ribosomal subunit. Contacts proteins S4 and S8.

With S4 and S12 plays an important role in translational accuracy. Functionally, located at the back of the 30S subunit body where it stabilizes the conformation of the head with respect to the body. In Thermosipho africanus (strain TCF52B), this protein is Small ribosomal subunit protein uS5.